Reading from the N-terminus, the 708-residue chain is Polyribonucleotide nucleotidyltransferase (708 aa).

Mg(2+)-binding residues include Asp490 and Asp496. Residues 557 to 619 (PRIETMTIPK…KSIDDAIRLI (63 aa)) form the KH domain. An S1 motif domain is found at 629–699 (GEVYKGKVRS…KTGKFKLSRK (71 aa)).

This sequence belongs to the polyribonucleotide nucleotidyltransferase family. Requires Mg(2+) as cofactor.

It is found in the cytoplasm. The enzyme catalyses RNA(n+1) + phosphate = RNA(n) + a ribonucleoside 5'-diphosphate. In terms of biological role, involved in mRNA degradation. Catalyzes the phosphorolysis of single-stranded polyribonucleotides processively in the 3'- to 5'-direction. The polypeptide is Polyribonucleotide nucleotidyltransferase (Bacteroides fragilis (strain ATCC 25285 / DSM 2151 / CCUG 4856 / JCM 11019 / LMG 10263 / NCTC 9343 / Onslow / VPI 2553 / EN-2)).